Reading from the N-terminus, the 616-residue chain is Homeodomain-interacting protein kinase 4 (616 aa).

The Protein kinase domain maps to Tyr-11–Val-347. ATP contacts are provided by residues Leu-17–Val-25 and Lys-40. Asp-136 (proton acceptor) is an active-site residue. A disordered region spans residues Arg-485–His-616. Positions Lys-496 to Ser-511 are enriched in polar residues. Phosphoserine is present on Ser-511.

The protein belongs to the protein kinase superfamily. CMGC Ser/Thr protein kinase family. HIPK subfamily. Autophosphorylated.

The protein localises to the cytoplasm. The enzyme catalyses L-seryl-[protein] + ATP = O-phospho-L-seryl-[protein] + ADP + H(+). It carries out the reaction L-threonyl-[protein] + ATP = O-phospho-L-threonyl-[protein] + ADP + H(+). In terms of biological role, protein kinase that phosphorylates TP53, and thus induces TP53 repression of BIRC5 promoter. May act as a corepressor of transcription factors (Potential). The chain is Homeodomain-interacting protein kinase 4 (HIPK4) from Macaca fascicularis (Crab-eating macaque).